A 430-amino-acid polypeptide reads, in one-letter code: Serine--tRNA ligase (430 aa).

L-serine is bound at residue 237 to 239; that stretch reads TAE. 268–270 lines the ATP pocket; the sequence is RSE. L-serine is bound at residue Glu291. 355-358 is an ATP binding site; that stretch reads EISS. L-serine is bound at residue Ser391.

Belongs to the class-II aminoacyl-tRNA synthetase family. Type-1 seryl-tRNA synthetase subfamily. As to quaternary structure, homodimer. The tRNA molecule binds across the dimer.

Its subcellular location is the cytoplasm. It catalyses the reaction tRNA(Ser) + L-serine + ATP = L-seryl-tRNA(Ser) + AMP + diphosphate + H(+). The catalysed reaction is tRNA(Sec) + L-serine + ATP = L-seryl-tRNA(Sec) + AMP + diphosphate + H(+). It participates in aminoacyl-tRNA biosynthesis; selenocysteinyl-tRNA(Sec) biosynthesis; L-seryl-tRNA(Sec) from L-serine and tRNA(Sec): step 1/1. Its function is as follows. Catalyzes the attachment of serine to tRNA(Ser). Is also able to aminoacylate tRNA(Sec) with serine, to form the misacylated tRNA L-seryl-tRNA(Sec), which will be further converted into selenocysteinyl-tRNA(Sec). This Escherichia fergusonii (strain ATCC 35469 / DSM 13698 / CCUG 18766 / IAM 14443 / JCM 21226 / LMG 7866 / NBRC 102419 / NCTC 12128 / CDC 0568-73) protein is Serine--tRNA ligase.